We begin with the raw amino-acid sequence, 427 residues long: Serine hydroxymethyltransferase (427 aa).

Gly-122–Ile-124 serves as a coordination point for (6S)-5,6,7,8-tetrahydrofolate. Lys-228 is modified (N6-(pyridoxal phosphate)lysine).

The protein belongs to the SHMT family. In terms of assembly, homodimer. Pyridoxal 5'-phosphate serves as cofactor.

It is found in the cytoplasm. It functions in the pathway amino-acid biosynthesis; glycine biosynthesis; glycine from L-serine: step 1/1. Functionally, catalyzes the reversible interconversion of serine and glycine with a modified folate serving as the one-carbon carrier. Also exhibits a pteridine-independent aldolase activity toward beta-hydroxyamino acids, producing glycine and aldehydes, via a retro-aldol mechanism. In Thermococcus onnurineus (strain NA1), this protein is Serine hydroxymethyltransferase.